The chain runs to 368 residues: MNDETTPANKNPEKAELRCGWTTGACATAATKAALTALITGEFPDPVGIILPKGEVPYFQLAYEGLGEGYAMAGIVKDAGDDPDVTHGATIISTVYPAPPGTGIIFRAGEGVGTVTREGLAIPPGEAAINPVPRRMMTEICEAICAEYGLPADLVITISVPGGEEIAQKTWNPRLGIIGGISILGTTGVVHPFSCSAWIHSIHRGIDVARAAGQKHVLGATGSTSEDAAQALYNLPDFAILDMGDFAGGVLKYLREHPIDRLTIAGGFAKLTKLAQGALDLHSSRSQVDKGFLWQIAERAGAPADMKERILLANTAMEVLELTQSIGIDIAGPIALEARQTALKTLRGAPVEVEIIVTDRKGNILARV.

Belongs to the CbiD family.

The enzyme catalyses Co-precorrin-5B + S-adenosyl-L-methionine = Co-precorrin-6A + S-adenosyl-L-homocysteine. It participates in cofactor biosynthesis; adenosylcobalamin biosynthesis; cob(II)yrinate a,c-diamide from sirohydrochlorin (anaerobic route): step 6/10. In terms of biological role, catalyzes the methylation of C-1 in cobalt-precorrin-5B to form cobalt-precorrin-6A. The polypeptide is Cobalt-precorrin-5B C(1)-methyltransferase (Brucella canis (strain ATCC 23365 / NCTC 10854 / RM-666)).